A 188-amino-acid chain; its full sequence is Adenine phosphoribosyltransferase (188 aa).

This sequence belongs to the purine/pyrimidine phosphoribosyltransferase family. As to quaternary structure, homodimer.

The protein resides in the cytoplasm. The enzyme catalyses AMP + diphosphate = 5-phospho-alpha-D-ribose 1-diphosphate + adenine. Its pathway is purine metabolism; AMP biosynthesis via salvage pathway; AMP from adenine: step 1/1. In terms of biological role, catalyzes a salvage reaction resulting in the formation of AMP, that is energically less costly than de novo synthesis. This chain is Adenine phosphoribosyltransferase, found in Burkholderia thailandensis (strain ATCC 700388 / DSM 13276 / CCUG 48851 / CIP 106301 / E264).